The chain runs to 436 residues: Histidinol dehydrogenase (436 aa).

Substrate is bound by residues T240, Q262, and H265. 2 residues coordinate Zn(2+): Q262 and H265. Catalysis depends on proton acceptor residues E331 and H332. Substrate is bound by residues H332, D365, E419, and H424. Residue D365 participates in Zn(2+) binding. H424 is a Zn(2+) binding site.

The protein belongs to the histidinol dehydrogenase family. Zn(2+) is required as a cofactor.

The catalysed reaction is L-histidinol + 2 NAD(+) + H2O = L-histidine + 2 NADH + 3 H(+). The protein operates within amino-acid biosynthesis; L-histidine biosynthesis; L-histidine from 5-phospho-alpha-D-ribose 1-diphosphate: step 9/9. In terms of biological role, catalyzes the sequential NAD-dependent oxidations of L-histidinol to L-histidinaldehyde and then to L-histidine. In Leifsonia xyli subsp. xyli (strain CTCB07), this protein is Histidinol dehydrogenase.